We begin with the raw amino-acid sequence, 92 residues long: Small ribosomal subunit protein uS19c (92 aa).

Belongs to the universal ribosomal protein uS19 family.

It is found in the plastid. The protein localises to the chloroplast. Its function is as follows. Protein S19 forms a complex with S13 that binds strongly to the 16S ribosomal RNA. The polypeptide is Small ribosomal subunit protein uS19c (Spirogyra maxima (Green alga)).